The primary structure comprises 395 residues: Yellow-related salivary protein M35 (395 aa).

Positions M1–S18 are cleaved as a signal peptide.

The protein belongs to the major royal jelly protein family. Salivary gland (at protein level).

It is found in the secreted. In terms of biological role, probably modulates blood feeding of sand flies on vertebrate species by binding and sequestering different mediators involved in the host response. Functions as a chemoattractant for host neutrophils; likely acts through a G-protein-coupled receptor and effect is dependent on calcium influx and phosphatidylinositol 3-kinases (PI3K) activity. Functionally, (Microbial infection) Probably enhances infection caused by Leishmania species in the host through augmentation of host neutrophil recruitment into the skin. The protein is Yellow-related salivary protein M35 of Phlebotomus duboscqi (Sandfly).